The primary structure comprises 392 residues: Transcription factor GATA-4 (392 aa).

Positions serine 75–leucine 113 are disordered. Positions phenylalanine 91–leucine 113 are enriched in polar residues. GATA-type zinc fingers lie at residues cysteine 184 to cysteine 208 and cysteine 238 to cysteine 262. Disordered stretches follow at residues lysine 279–serine 339 and methionine 359–alanine 392. Residues threonine 284–serine 293 show a composition bias toward basic residues. The segment covering serine 302–serine 316 has biased composition (low complexity). Over residues leucine 364–asparagine 380 the composition is skewed to polar residues.

As to expression, expressed at high levels in heart, small intestine, stomach, ovary, and liver. Found at much lower levels in lung, spleen, pancreas and skin.

The protein resides in the nucleus. Its function is as follows. Transcriptional activator that binds to the consensus sequence 5'-AGATAG-3'. Associated with cardiac specification and can regulate cardiac-specific transcription during embryogenesis. Activates the expression of cardiac MHC-alpha in vivo. The sequence is that of Transcription factor GATA-4 (gata4) from Xenopus laevis (African clawed frog).